The chain runs to 266 residues: Small ribosomal subunit protein eS1 (266 aa).

The segment at 233–266 is disordered; sequence GEGGGSSAAKPSGDDTGAKVDRADGYEPPIQETV. The span at 244-257 shows a compositional bias: basic and acidic residues; the sequence is SGDDTGAKVDRADG.

The protein belongs to the eukaryotic ribosomal protein eS1 family. Component of the small ribosomal subunit. Mature ribosomes consist of a small (40S) and a large (60S) subunit. The 40S subunit contains about 33 different proteins and 1 molecule of RNA (18S). The 60S subunit contains about 49 different proteins and 3 molecules of RNA (28S, 5.8S and 5S). Part of the small subunit (SSU) processome, composed of more than 70 proteins and the RNA chaperone small nucleolar RNA (snoRNA) U3.

It is found in the cytoplasm. It localises to the nucleus. Its subcellular location is the nucleolus. Functionally, component of the small ribosomal subunit. The ribosome is a large ribonucleoprotein complex responsible for the synthesis of proteins in the cell. Part of the small subunit (SSU) processome, first precursor of the small eukaryotic ribosomal subunit. During the assembly of the SSU processome in the nucleolus, many ribosome biogenesis factors, an RNA chaperone and ribosomal proteins associate with the nascent pre-rRNA and work in concert to generate RNA folding, modifications, rearrangements and cleavage as well as targeted degradation of pre-ribosomal RNA by the RNA exosome. May play a role during erythropoiesis. The chain is Small ribosomal subunit protein eS1 (rps3a) from Salmo salar (Atlantic salmon).